The sequence spans 485 residues: Ribulose bisphosphate carboxylase large chain (485 aa).

Positions 124 and 174 each coordinate substrate. Catalysis depends on K176, which acts as the Proton acceptor. K178 provides a ligand contact to substrate. Mg(2+) is bound by residues K202, D204, and E205. N6-carboxylysine is present on K202. Residue H294 is the Proton acceptor of the active site. Substrate is bound by residues R295, H327, and S379.

The protein belongs to the RuBisCO large chain family. Type I subfamily. As to quaternary structure, heterohexadecamer of 8 large chains and 8 small chains. Mg(2+) serves as cofactor.

It carries out the reaction 2 (2R)-3-phosphoglycerate + 2 H(+) = D-ribulose 1,5-bisphosphate + CO2 + H2O. The catalysed reaction is D-ribulose 1,5-bisphosphate + O2 = 2-phosphoglycolate + (2R)-3-phosphoglycerate + 2 H(+). Functionally, ruBisCO catalyzes two reactions: the carboxylation of D-ribulose 1,5-bisphosphate, the primary event in carbon dioxide fixation, as well as the oxidative fragmentation of the pentose substrate. Both reactions occur simultaneously and in competition at the same active site. The chain is Ribulose bisphosphate carboxylase large chain from Rhodopseudomonas palustris (strain HaA2).